Here is a 490-residue protein sequence, read N- to C-terminus: Cysteine--tRNA ligase (490 aa).

Cysteine 31 provides a ligand contact to Zn(2+). The 'HIGH' region motif lies at proline 33–histidine 43. Residues cysteine 226, histidine 251, and glutamate 255 each coordinate Zn(2+). The 'KMSKS' region motif lies at lysine 283 to serine 287. Residue lysine 286 coordinates ATP.

Belongs to the class-I aminoacyl-tRNA synthetase family. As to quaternary structure, monomer. Zn(2+) serves as cofactor.

Its subcellular location is the cytoplasm. It catalyses the reaction tRNA(Cys) + L-cysteine + ATP = L-cysteinyl-tRNA(Cys) + AMP + diphosphate. The protein is Cysteine--tRNA ligase of Porphyromonas gingivalis (strain ATCC BAA-308 / W83).